The sequence spans 372 residues: Chaperone protein DnaJ (372 aa).

The 66-residue stretch at aspartate 5–glycine 70 folds into the J domain. The CR-type zinc-finger motif lies at glycine 134–glutamate 212. 8 residues coordinate Zn(2+): cysteine 147, cysteine 150, cysteine 164, cysteine 167, cysteine 186, cysteine 189, cysteine 200, and cysteine 203. 4 CXXCXGXG motif repeats span residues cysteine 147 to glycine 154, cysteine 164 to glycine 171, cysteine 186 to glycine 193, and cysteine 200 to glycine 207.

Belongs to the DnaJ family. Homodimer. The cofactor is Zn(2+).

It localises to the cytoplasm. Functionally, participates actively in the response to hyperosmotic and heat shock by preventing the aggregation of stress-denatured proteins and by disaggregating proteins, also in an autonomous, DnaK-independent fashion. Unfolded proteins bind initially to DnaJ; upon interaction with the DnaJ-bound protein, DnaK hydrolyzes its bound ATP, resulting in the formation of a stable complex. GrpE releases ADP from DnaK; ATP binding to DnaK triggers the release of the substrate protein, thus completing the reaction cycle. Several rounds of ATP-dependent interactions between DnaJ, DnaK and GrpE are required for fully efficient folding. Also involved, together with DnaK and GrpE, in the DNA replication of plasmids through activation of initiation proteins. In Wolbachia sp. subsp. Drosophila simulans (strain wRi), this protein is Chaperone protein DnaJ.